The chain runs to 501 residues: Lysine--tRNA ligase (501 aa).

Mg(2+) contacts are provided by Glu402 and Glu409.

This sequence belongs to the class-II aminoacyl-tRNA synthetase family. In terms of assembly, homodimer. Mg(2+) is required as a cofactor.

It localises to the cytoplasm. The enzyme catalyses tRNA(Lys) + L-lysine + ATP = L-lysyl-tRNA(Lys) + AMP + diphosphate. In Helicobacter pylori (strain ATCC 700392 / 26695) (Campylobacter pylori), this protein is Lysine--tRNA ligase (lysS).